The chain runs to 368 residues: MEPVHVSTSSKVLFKKVRKIVPPLLEKFHKGQHGRVAVIGGSLDYTGAPYFSSMASARLGMSSNHVICEKSAATVIKSYSPNLMVHPLLPSTDSVSNPGSIDARALASPIVSMLSRLHALVIGPGLGRDGVTLKVVTEVMKEARSRSIPFVLDADGLLLVTEDPNLVKGYKDCILTPNVNEFSRLAKALGIEVPSQAQIAAQTDESDKTSKESQACEQLSQALGGVTIIQKGPHDVISNGVTTLISDLKGGLKRSGGQGDTLTGSLGTLLAWRAAYHNKSWDSGEQENPKEAQSKQDVLAELESENKRMSPATTLLLVAWAGSGITRECSRRAFNAKGRSLQASDLTDEVHESFLELIGEPEASRTHL.

Residues 13-357 (LFKKVRKIVP…DEVHESFLEL (345 aa)) enclose the YjeF C-terminal domain. Residues G125 and 178–184 (NVNEFSR) contribute to the (6S)-NADPHX site. ATP is bound by residues 231-235 (KGPHD) and 250-259 (GGLKRSGGQG). D260 serves as a coordination point for (6S)-NADPHX.

Belongs to the NnrD/CARKD family. The cofactor is Mg(2+).

The protein localises to the cytoplasm. The enzyme catalyses (6S)-NADHX + ATP = ADP + phosphate + NADH + H(+). The catalysed reaction is (6S)-NADPHX + ATP = ADP + phosphate + NADPH + H(+). Catalyzes the dehydration of the S-form of NAD(P)HX at the expense of ATP, which is converted to ADP. Together with NAD(P)HX epimerase, which catalyzes the epimerization of the S- and R-forms, the enzyme allows the repair of both epimers of NAD(P)HX, a damaged form of NAD(P)H that is a result of enzymatic or heat-dependent hydration. The sequence is that of ATP-dependent (S)-NAD(P)H-hydrate dehydratase from Aspergillus fumigatus (strain ATCC MYA-4609 / CBS 101355 / FGSC A1100 / Af293) (Neosartorya fumigata).